The primary structure comprises 239 residues: uncharacterized protein (239 aa).

3 helical membrane passes run 125–144, 149–171, and 197–216; these read LAII…LILY, IFVL…FLFL, and SVLN…GILF.

It localises to the cell membrane. This is an uncharacterized protein from Aquifex aeolicus (strain VF5).